We begin with the raw amino-acid sequence, 246 residues long: DNA repair protein RecO (246 aa).

The protein belongs to the RecO family.

In terms of biological role, involved in DNA repair and RecF pathway recombination. This chain is DNA repair protein RecO, found in Methylorubrum populi (strain ATCC BAA-705 / NCIMB 13946 / BJ001) (Methylobacterium populi).